The following is a 57-amino-acid chain: Large ribosomal subunit protein bL32 (57 aa).

The interval 1 to 23 (MAVPKKKTSKSKRDKRRATWRHK) is disordered.

It belongs to the bacterial ribosomal protein bL32 family.

The chain is Large ribosomal subunit protein bL32 from Nostoc sp. (strain PCC 7120 / SAG 25.82 / UTEX 2576).